Consider the following 278-residue polypeptide: Large ribosomal subunit protein uL2 (278 aa).

Positions 222-264 (RGVAMNPVDHPHGGGEGRTSGGRNPVTPWGVPTKGKKTRSNKR) are disordered.

It belongs to the universal ribosomal protein uL2 family. Part of the 50S ribosomal subunit. Forms a bridge to the 30S subunit in the 70S ribosome.

In terms of biological role, one of the primary rRNA binding proteins. Required for association of the 30S and 50S subunits to form the 70S ribosome, for tRNA binding and peptide bond formation. It has been suggested to have peptidyltransferase activity; this is somewhat controversial. Makes several contacts with the 16S rRNA in the 70S ribosome. The sequence is that of Large ribosomal subunit protein uL2 from Methylobacterium radiotolerans (strain ATCC 27329 / DSM 1819 / JCM 2831 / NBRC 15690 / NCIMB 10815 / 0-1).